The sequence spans 540 residues: GMP synthase [glutamine-hydrolyzing] (540 aa).

Residues 26–216 (IIIILDFGSQ…VYHICECEPT (191 aa)) form the Glutamine amidotransferase type-1 domain. C103 (nucleophile) is an active-site residue. Residues H190 and E192 contribute to the active site. One can recognise a GMPS ATP-PPase domain in the interval 217 to 415 (WTTAAFVEEA…VGLPEEIVQR (199 aa)). ATP is bound at residue 244 to 250 (SGGVDSS).

In terms of assembly, homodimer.

The catalysed reaction is XMP + L-glutamine + ATP + H2O = GMP + L-glutamate + AMP + diphosphate + 2 H(+). It participates in purine metabolism; GMP biosynthesis; GMP from XMP (L-Gln route): step 1/1. In terms of biological role, catalyzes the synthesis of GMP from XMP. The polypeptide is GMP synthase [glutamine-hydrolyzing] (Trichormus variabilis (strain ATCC 29413 / PCC 7937) (Anabaena variabilis)).